Reading from the N-terminus, the 607-residue chain is Pescadillo homolog (607 aa).

Positions 320 to 413 (KLKNLFKGLK…KLLPVNKYLI (94 aa)) constitute a BRCT domain. Residues 486 to 607 (EALNSGALEE…KTQRKEILAK (122 aa)) are disordered. Acidic residues predominate over residues 495–511 (EAPEEEDDDEEAPEEDE). Positions 530-549 (IFKENPSEQKKLTKQEEALR) are enriched in basic and acidic residues. Residues 551 to 562 (RMVKSRHKKLYR) show a composition bias toward basic residues. Over residues 563–607 (KMLEKQKKQTKEANLLKEKRQQIDKKQRVEQTQKRKTQRKEILAK) the composition is skewed to basic and acidic residues.

It belongs to the pescadillo family.

It is found in the nucleus. The protein resides in the nucleolus. The protein localises to the nucleoplasm. Required for maturation of ribosomal RNAs and formation of the large ribosomal subunit. This is Pescadillo homolog from Culex quinquefasciatus (Southern house mosquito).